Reading from the N-terminus, the 231-residue chain is UPF0758 protein aq_1610 (231 aa).

The region spanning 110–231 (SIRNPQEAFE…YFSFREEGVL (122 aa)) is the MPN domain. The Zn(2+) site is built by His180, His182, and Asp193. Residues 180–193 (HNHPQGEPSPSNED) carry the JAMM motif motif.

This sequence belongs to the UPF0758 family.

The sequence is that of UPF0758 protein aq_1610 from Aquifex aeolicus (strain VF5).